Here is a 149-residue protein sequence, read N- to C-terminus: Transcriptional repressor NrdR (149 aa).

The segment at 3–34 (CPFCSAVDTKVIDSRLVAEGHQVRRRRECLLC) is a zinc-finger region. The 91-residue stretch at 49–139 (PRVIKSNGSR…VYRSFEDIRE (91 aa)) folds into the ATP-cone domain.

The protein belongs to the NrdR family. It depends on Zn(2+) as a cofactor.

In terms of biological role, negatively regulates transcription of bacterial ribonucleotide reductase nrd genes and operons by binding to NrdR-boxes. The chain is Transcriptional repressor NrdR from Aeromonas hydrophila subsp. hydrophila (strain ATCC 7966 / DSM 30187 / BCRC 13018 / CCUG 14551 / JCM 1027 / KCTC 2358 / NCIMB 9240 / NCTC 8049).